The primary structure comprises 348 residues: MKVIVDNKIPYIREAIEQIADEVIYVPGKDFTPELVQDADALIIRTRTRCDRSLLAGSKVKFIATATIGFDHIDTAYCREAGITWTNAPGCNSASVAQYIQSALFILQQTRGMKLNQMTIGIVGVGNVGSKVADVARKLGIQVMLNDLPREEREESTMFASLKSIAEKCDIITFHVPLYKEGKYKTYHLADKHFFHSLKKGAVIMNTSRGEVIETEALLEALRSGILSDAVIDVWEHEPDIDLELLEKVIIGTPHIAGYSADGKANATRMSLEALCRFFRIETDYRITPPEPKNKLISTATYEEASLMIYDPRRDSDALKSHPGLFEQLRGDYPLRREEGAYRIVITK.

Positions 46 and 67 each coordinate substrate. Residue Asp-147 participates in NAD(+) binding. Residue Arg-209 is part of the active site. Asp-233 contributes to the NAD(+) binding site. Glu-238 is an active-site residue. His-255 acts as the Proton donor in catalysis. Residue Gly-258 coordinates NAD(+). Tyr-259 contributes to the substrate binding site.

The protein belongs to the D-isomer specific 2-hydroxyacid dehydrogenase family. PdxB subfamily. In terms of assembly, homodimer.

Its subcellular location is the cytoplasm. It catalyses the reaction 4-phospho-D-erythronate + NAD(+) = (R)-3-hydroxy-2-oxo-4-phosphooxybutanoate + NADH + H(+). It functions in the pathway cofactor biosynthesis; pyridoxine 5'-phosphate biosynthesis; pyridoxine 5'-phosphate from D-erythrose 4-phosphate: step 2/5. Catalyzes the oxidation of erythronate-4-phosphate to 3-hydroxy-2-oxo-4-phosphonooxybutanoate. The protein is Erythronate-4-phosphate dehydrogenase of Bacteroides fragilis (strain ATCC 25285 / DSM 2151 / CCUG 4856 / JCM 11019 / LMG 10263 / NCTC 9343 / Onslow / VPI 2553 / EN-2).